Consider the following 71-residue polypeptide: Antimicrobial peptide VpCT4 (71 aa).

A signal peptide spans 1–23; the sequence is MKTQFVILIVAIVILQLISQSEA. Leucine 39 is modified (leucine amide). Positions 40–71 are excised as a propeptide; that stretch reads GKRGVQNMDQFDDIFEPELSEADLRYLQDLLR.

Belongs to the non-disulfide-bridged peptide (NDBP) superfamily. Short antimicrobial peptide (group 4) family. In terms of tissue distribution, expressed by the venom gland.

The protein resides in the secreted. The protein localises to the target cell membrane. In terms of biological role, antimicrobial peptide with potent activity against bacteria S.aureus (MIC=9.3 uM), weak activity against E.coli (MIC&gt;100 uM), and weak activity against pathogenic yeasts C.albicans (MIC=100 uM) and C.glabrata (MIC=100 uM). Is not very effective against P.aeruginosa (MIC&gt;300 uM). Also provokes high hemolysis on human erythrocytes (HC(50)=4.8 uM). This is Antimicrobial peptide VpCT4 from Mesomexovis punctatus (Scorpion).